Consider the following 127-residue polypeptide: uncharacterized protein (127 aa).

2 helical membrane-spanning segments follow: residues 42-62 (LLIS…IAFI) and 78-98 (GLPI…YYFL).

The protein localises to the membrane. This is an uncharacterized protein from Schizosaccharomyces pombe (strain 972 / ATCC 24843) (Fission yeast).